The primary structure comprises 286 residues: Bifunctional protein FolD (286 aa).

Residues 160–162, Ser189, and Thr230 contribute to the NADP(+) site; that span reads GRS.

Belongs to the tetrahydrofolate dehydrogenase/cyclohydrolase family. Homodimer.

It carries out the reaction (6R)-5,10-methylene-5,6,7,8-tetrahydrofolate + NADP(+) = (6R)-5,10-methenyltetrahydrofolate + NADPH. The enzyme catalyses (6R)-5,10-methenyltetrahydrofolate + H2O = (6R)-10-formyltetrahydrofolate + H(+). The protein operates within one-carbon metabolism; tetrahydrofolate interconversion. Its function is as follows. Catalyzes the oxidation of 5,10-methylenetetrahydrofolate to 5,10-methenyltetrahydrofolate and then the hydrolysis of 5,10-methenyltetrahydrofolate to 10-formyltetrahydrofolate. The polypeptide is Bifunctional protein FolD (Chlamydia pneumoniae (Chlamydophila pneumoniae)).